Here is a 599-residue protein sequence, read N- to C-terminus: MTQLDLIRNFSIVAHIDHGKSTLADRLIQLTGTVAERDMKAQILDSMEIERERGITIKANTVRIEYPAKDGKTYVLNLIDTPGHVDFAYEVSRSMRAVEGSLLVVDASQGVEAQTLANVYQALDAGHEIVPVLNKIDLPAAEPDRVRTQIEDVIGLDASDAVLISAKSGLGIPDVLEAIVTRLPPPKGNREAPLKAMLVDSWYDAYLGVVVMIRVMDGVIRKGDRVKMMQTGAVYGIDRLAVLKPQMVDIAELGPGEIGVLTASIKQVRDTRVGDTITHEKKGCEAPLPGFKPAQPVVFCGLFPVDANDFEGLREAIEKLALNDASFTYEMETSAALGFGFRCGFLGLLHLEVVRDRLEREYDLDLITTAPSVVYQIYMRDGTVQELHNPTDMPDLTLVDHIEEPRIRATIMVPDEYLGDVLKLCQDRRGIQLDLSYAGSRAMVVYDLPLNEVVFDFYDRLKSVTKGYASFDYQITGYREDFLVKMSILVNDEPVDALSMMVHRDRADLRGRAMVEKLKELIPRHMFKIPIQAAIGGRVIARETISAMRKDVTAKCYGGDATRKRKLLDKQKAGKKKMRQFGKVEIPQQAFINALKMDS.

The 183-residue stretch at 5 to 187 folds into the tr-type G domain; that stretch reads DLIRNFSIVA…AIVTRLPPPK (183 aa). GTP is bound by residues 17 to 22 and 134 to 137; these read DHGKST and NKID.

This sequence belongs to the TRAFAC class translation factor GTPase superfamily. Classic translation factor GTPase family. LepA subfamily.

Its subcellular location is the cell inner membrane. The enzyme catalyses GTP + H2O = GDP + phosphate + H(+). In terms of biological role, required for accurate and efficient protein synthesis under certain stress conditions. May act as a fidelity factor of the translation reaction, by catalyzing a one-codon backward translocation of tRNAs on improperly translocated ribosomes. Back-translocation proceeds from a post-translocation (POST) complex to a pre-translocation (PRE) complex, thus giving elongation factor G a second chance to translocate the tRNAs correctly. Binds to ribosomes in a GTP-dependent manner. This chain is Elongation factor 4, found in Cereibacter sphaeroides (strain ATCC 17025 / ATH 2.4.3) (Rhodobacter sphaeroides).